The following is a 454-amino-acid chain: Bifunctional protein GlmU (454 aa).

A pyrophosphorylase region spans residues 1–226 (MSTTVIILAA…AFEVEGVNDR (226 aa)). Residues 8–11 (LAAG), K22, Q73, 78–79 (GT), 100–102 (YGD), G137, E151, N166, and N224 contribute to the UDP-N-acetyl-alpha-D-glucosamine site. D102 is a binding site for Mg(2+). N224 contributes to the Mg(2+) binding site. The linker stretch occupies residues 227 to 247 (LQLAALEREFQKQQAKELMQQ). An N-acetyltransferase region spans residues 248 to 454 (GVTFADPARF…NYQRPQKLKK (207 aa)). Positions 330 and 348 each coordinate UDP-N-acetyl-alpha-D-glucosamine. The active-site Proton acceptor is H360. Positions 363 and 374 each coordinate UDP-N-acetyl-alpha-D-glucosamine. Acetyl-CoA is bound by residues A377, 383–384 (NY), S402, A420, and R437.

It in the N-terminal section; belongs to the N-acetylglucosamine-1-phosphate uridyltransferase family. In the C-terminal section; belongs to the transferase hexapeptide repeat family. In terms of assembly, homotrimer. The cofactor is Mg(2+).

Its subcellular location is the cytoplasm. The catalysed reaction is alpha-D-glucosamine 1-phosphate + acetyl-CoA = N-acetyl-alpha-D-glucosamine 1-phosphate + CoA + H(+). The enzyme catalyses N-acetyl-alpha-D-glucosamine 1-phosphate + UTP + H(+) = UDP-N-acetyl-alpha-D-glucosamine + diphosphate. It participates in nucleotide-sugar biosynthesis; UDP-N-acetyl-alpha-D-glucosamine biosynthesis; N-acetyl-alpha-D-glucosamine 1-phosphate from alpha-D-glucosamine 6-phosphate (route II): step 2/2. The protein operates within nucleotide-sugar biosynthesis; UDP-N-acetyl-alpha-D-glucosamine biosynthesis; UDP-N-acetyl-alpha-D-glucosamine from N-acetyl-alpha-D-glucosamine 1-phosphate: step 1/1. Its pathway is bacterial outer membrane biogenesis; LPS lipid A biosynthesis. Its function is as follows. Catalyzes the last two sequential reactions in the de novo biosynthetic pathway for UDP-N-acetylglucosamine (UDP-GlcNAc). The C-terminal domain catalyzes the transfer of acetyl group from acetyl coenzyme A to glucosamine-1-phosphate (GlcN-1-P) to produce N-acetylglucosamine-1-phosphate (GlcNAc-1-P), which is converted into UDP-GlcNAc by the transfer of uridine 5-monophosphate (from uridine 5-triphosphate), a reaction catalyzed by the N-terminal domain. This is Bifunctional protein GlmU from Acinetobacter baumannii (strain AYE).